We begin with the raw amino-acid sequence, 228 residues long: Response regulator SaeR (228 aa).

Residues 3 to 116 form the Response regulatory domain; the sequence is HLLIVDDEQD…ELVLRINNLL (114 aa). D51 bears the 4-aspartylphosphate mark. A DNA-binding region (ompR/PhoB-type) is located at residues 127 to 226; the sequence is VEQLSFDELT…VWGLGYKFER (100 aa).

Phosphorylated by SaeS.

It localises to the cytoplasm. In terms of biological role, member of the two-component regulatory system SaeR/SaeS involved in the regulation of staphylococcal virulence factors in a strain-dependent fashion. Probably functions as a transcriptional regulator via a specific DNA-binding domain, recognizing motifs near the promoter sequences of target genes. This is Response regulator SaeR (saeR) from Staphylococcus aureus (strain USA300).